Consider the following 705-residue polypeptide: Lethal(3)malignant brain tumor-like protein 2 (705 aa).

A disordered region spans residues 1-84 (MEKPRSIEET…GTPRSLDGSG (84 aa)). Phosphoserine is present on Ser13. Positions 15–25 (PMEEEEDDDLE) are enriched in acidic residues. A compositionally biased stretch (low complexity) spans 38-49 (SSVGSESSSYLE). Residues 50–60 (ESSEAENEDRE) are compositionally biased toward acidic residues. The residue at position 67 (Ser67) is a Phosphoserine. At Thr76 the chain carries Phosphothreonine. The segment at 81 to 116 (DGSGSEPAVCEMCGIVGTREAFFSKTKRFCSVSCSR) adopts an FCS-type zinc-finger fold. Zn(2+)-binding residues include Cys90, Cys93, Cys110, and Cys114. MBT repeat units lie at residues 179-283 (FDWG…LVPP), 291-391 (TDWK…IKMS), 397-500 (MAHH…LTPP), and 508-604 (FNWE…LQPP). At Ser338 the chain carries Phosphoserine. Lys405 participates in a covalent cross-link: Glycyl lysine isopeptide (Lys-Gly) (interchain with G-Cter in SUMO2). Positions 608-665 (EPATPLKAKEATKKKKKQFGKKRKRIPPTKTRPLRQGSKKPLLEDDPQGARKISSEPV) are disordered. The segment covering 619-634 (TKKKKKQFGKKRKRIP) has biased composition (basic residues). Residues Lys647, Lys659, and Lys675 each participate in a glycyl lysine isopeptide (Lys-Gly) (interchain with G-Cter in SUMO2) cross-link. Positions 680–705 (DVASPDKASSPELPVSVENIKQETDD) are disordered. Phosphoserine is present on residues Ser683, Ser688, and Ser689. Lys700 is covalently cross-linked (Glycyl lysine isopeptide (Lys-Gly) (interchain with G-Cter in SUMO1); alternate). Lys700 participates in a covalent cross-link: Glycyl lysine isopeptide (Lys-Gly) (interchain with G-Cter in SUMO2); alternate.

In terms of assembly, part of the E2F6.com-1 complex in G0 phase composed of E2F6, MGA, MAX, TFDP1, CBX3, BAT8, EUHMTASE1, RING1, RNF2, MBLR, BAT8 and YAF2.

Its subcellular location is the nucleus. Functionally, putative Polycomb group (PcG) protein. PcG proteins maintain the transcriptionally repressive state of genes, probably via a modification of chromatin, rendering it heritably changed in its expressibility. Its association with a chromatin-remodeling complex suggests that it may contribute to prevent expression of genes that trigger the cell into mitosis. Binds to monomethylated and dimethylated 'Lys-20' on histone H4. Binds histone H3 peptides that are monomethylated or dimethylated on 'Lys-4', 'Lys-9' or 'Lys-27'. This chain is Lethal(3)malignant brain tumor-like protein 2 (L3MBTL2), found in Homo sapiens (Human).